A 227-amino-acid polypeptide reads, in one-letter code: Probable septum site-determining protein MinC (227 aa).

It belongs to the MinC family. In terms of assembly, interacts with MinD and FtsZ.

Its function is as follows. Cell division inhibitor that blocks the formation of polar Z ring septums. Rapidly oscillates between the poles of the cell to destabilize FtsZ filaments that have formed before they mature into polar Z rings. Prevents FtsZ polymerization. In Photorhabdus laumondii subsp. laumondii (strain DSM 15139 / CIP 105565 / TT01) (Photorhabdus luminescens subsp. laumondii), this protein is Probable septum site-determining protein MinC.